The following is a 92-amino-acid chain: Large ribosomal subunit protein bL27 (92 aa).

A propeptide spanning residues 1–10 (MLLQLQIQLF) is cleaved from the precursor.

The protein belongs to the bacterial ribosomal protein bL27 family. Post-translationally, the N-terminus is cleaved by ribosomal processing cysteine protease Prp.

This Aster yellows witches'-broom phytoplasma (strain AYWB) protein is Large ribosomal subunit protein bL27.